The chain runs to 370 residues: 3-isopropylmalate dehydrogenase 2 (370 aa).

77–90 (GPKWDAVPYEVRPE) contacts NAD(+). Positions 97, 107, 135, and 226 each coordinate substrate. Mg(2+) contacts are provided by aspartate 226, aspartate 250, and aspartate 254. NAD(+) is bound at residue 290 to 302 (GSAPDIAGKGLAN).

It belongs to the isocitrate and isopropylmalate dehydrogenases family. LeuB type 1 subfamily. In terms of assembly, homodimer. Requires Mg(2+) as cofactor. The cofactor is Mn(2+).

Its subcellular location is the cytoplasm. The catalysed reaction is (2R,3S)-3-isopropylmalate + NAD(+) = 4-methyl-2-oxopentanoate + CO2 + NADH. It functions in the pathway amino-acid biosynthesis; L-leucine biosynthesis; L-leucine from 3-methyl-2-oxobutanoate: step 3/4. In terms of biological role, catalyzes the oxidation of 3-carboxy-2-hydroxy-4-methylpentanoate (3-isopropylmalate) to 3-carboxy-4-methyl-2-oxopentanoate. The product decarboxylates to 4-methyl-2 oxopentanoate. The polypeptide is 3-isopropylmalate dehydrogenase 2 (Bradyrhizobium diazoefficiens (strain JCM 10833 / BCRC 13528 / IAM 13628 / NBRC 14792 / USDA 110)).